A 62-amino-acid chain; its full sequence is Large ribosomal subunit protein bL28 (62 aa).

The disordered stretch occupies residues 1–28; that stretch reads MARVCAITGRKARSGNSRSHAMNATKRK.

This sequence belongs to the bacterial ribosomal protein bL28 family.

This Bacillus cytotoxicus (strain DSM 22905 / CIP 110041 / 391-98 / NVH 391-98) protein is Large ribosomal subunit protein bL28.